Reading from the N-terminus, the 370-residue chain is Anhydro-N-acetylmuramic acid kinase (370 aa).

ATP is bound at residue 13–20; the sequence is GTSMDGVD.

The protein belongs to the anhydro-N-acetylmuramic acid kinase family.

The enzyme catalyses 1,6-anhydro-N-acetyl-beta-muramate + ATP + H2O = N-acetyl-D-muramate 6-phosphate + ADP + H(+). Its pathway is amino-sugar metabolism; 1,6-anhydro-N-acetylmuramate degradation. It functions in the pathway cell wall biogenesis; peptidoglycan recycling. Functionally, catalyzes the specific phosphorylation of 1,6-anhydro-N-acetylmuramic acid (anhMurNAc) with the simultaneous cleavage of the 1,6-anhydro ring, generating MurNAc-6-P. Is required for the utilization of anhMurNAc either imported from the medium or derived from its own cell wall murein, and thus plays a role in cell wall recycling. The chain is Anhydro-N-acetylmuramic acid kinase from Shewanella frigidimarina (strain NCIMB 400).